We begin with the raw amino-acid sequence, 229 residues long: Potassium/proton antiporter CemA (229 aa).

3 helical membrane passes run 7–27, 107–127, and 189–209; these read FTPL…SFSV, ILHF…SILG, and IISG…KYWI.

This sequence belongs to the CemA family.

Its subcellular location is the plastid. It localises to the chloroplast inner membrane. The catalysed reaction is K(+)(in) + H(+)(out) = K(+)(out) + H(+)(in). In terms of biological role, contributes to K(+)/H(+) antiport activity by supporting proton efflux to control proton extrusion and homeostasis in chloroplasts in a light-dependent manner to modulate photosynthesis. Prevents excessive induction of non-photochemical quenching (NPQ) under continuous-light conditions. Indirectly promotes efficient inorganic carbon uptake into chloroplasts. This chain is Potassium/proton antiporter CemA, found in Nicotiana sylvestris (Wood tobacco).